Consider the following 469-residue polypeptide: Protein nucleotidyltransferase YdiU (469 aa).

ATP is bound by residues glycine 80, glycine 82, arginine 83, lysine 103, aspartate 115, glycine 116, arginine 166, and arginine 173. Catalysis depends on aspartate 243, which acts as the Proton acceptor. Residues asparagine 244 and aspartate 253 each contribute to the Mg(2+) site. ATP is bound at residue aspartate 253.

Belongs to the SELO family. Mg(2+) is required as a cofactor. The cofactor is Mn(2+).

The catalysed reaction is L-seryl-[protein] + ATP = 3-O-(5'-adenylyl)-L-seryl-[protein] + diphosphate. The enzyme catalyses L-threonyl-[protein] + ATP = 3-O-(5'-adenylyl)-L-threonyl-[protein] + diphosphate. It catalyses the reaction L-tyrosyl-[protein] + ATP = O-(5'-adenylyl)-L-tyrosyl-[protein] + diphosphate. It carries out the reaction L-histidyl-[protein] + UTP = N(tele)-(5'-uridylyl)-L-histidyl-[protein] + diphosphate. The catalysed reaction is L-seryl-[protein] + UTP = O-(5'-uridylyl)-L-seryl-[protein] + diphosphate. The enzyme catalyses L-tyrosyl-[protein] + UTP = O-(5'-uridylyl)-L-tyrosyl-[protein] + diphosphate. In terms of biological role, nucleotidyltransferase involved in the post-translational modification of proteins. It can catalyze the addition of adenosine monophosphate (AMP) or uridine monophosphate (UMP) to a protein, resulting in modifications known as AMPylation and UMPylation. The polypeptide is Protein nucleotidyltransferase YdiU (Pseudoalteromonas translucida (strain TAC 125)).